The following is a 1045-amino-acid chain: Pre-mRNA-splicing factor ATP-dependent RNA helicase DHX16 (1045 aa).

Residues 101-211 (EDSEESSEEA…ERSDKKAYEE (111 aa)) form a disordered region. 3 positions are modified to phosphoserine: serine 103, serine 106, and serine 107. A compositionally biased stretch (basic residues) spans 119–131 (QKKRKKRKHLRKK). Over residues 135–144 (EEEEEEEEEV) the composition is skewed to acidic residues. Serine 164 is modified (phosphoserine). Basic and acidic residues predominate over residues 170-211 (RTERERLQDLEERDAFAERVRQRDKDRTRNVLERSDKKAYEE). The Helicase ATP-binding domain occupies 413-577 (LAAVANHQIL…FDDAPVFRIP (165 aa)). 426 to 433 (GETGSGKT) serves as a coordination point for ATP. A DEAH box motif is present at residues 524 to 527 (DEAH). The 174-residue stretch at 602–775 (SVLQIHVTQP…NVVLLLKSLG (174 aa)) folds into the Helicase C-terminal domain. Threonine 716 carries the post-translational modification Phosphothreonine. The interval 1026 to 1045 (EDPHAKKMPKKTGKTREELG) is disordered.

This sequence belongs to the DEAD box helicase family. DEAH subfamily. DDX16/PRP8 sub-subfamily. In terms of assembly, component of pre-catalytic spliceosome complexes. Component of the minor spliceosome, which splices U12-type introns. Interacts with GPKOW. Interacts with TRIM6. Interacts with RIGI.

It is found in the nucleus. The protein resides in the nucleoplasm. It localises to the cytoplasm. The catalysed reaction is ATP + H2O = ADP + phosphate + H(+). Its function is as follows. Required for pre-mRNA splicing as a component of the spliceosome. Contributes to pre-mRNA splicing after spliceosome formation and prior to the first transesterification reaction. As a component of the minor spliceosome, involved in the splicing of U12-type introns in pre-mRNAs. Also plays a role in innate antiviral response by acting as a pattern recognition receptor sensing splicing signals in viral RNA. Mechanistically, TRIM6 promotes the interaction between unanchored 'Lys-48'-polyubiquitin chains and DHX16, leading to DHX16 interaction with RIGI and ssRNA to amplify RIGI-dependent innate antiviral immune responses. This Sus scrofa (Pig) protein is Pre-mRNA-splicing factor ATP-dependent RNA helicase DHX16 (DHX16).